A 394-amino-acid chain; its full sequence is 1-deoxy-D-xylulose 5-phosphate reductoisomerase (394 aa).

NADPH is bound by residues threonine 28, glycine 29, serine 30, isoleucine 31, asparagine 57, and asparagine 133. Residue lysine 134 participates in 1-deoxy-D-xylulose 5-phosphate binding. Glutamate 135 lines the NADPH pocket. Mn(2+) is bound at residue aspartate 157. Residues serine 158, glutamate 159, serine 183, and histidine 206 each coordinate 1-deoxy-D-xylulose 5-phosphate. Glutamate 159 is a binding site for Mn(2+). Glycine 212 is an NADPH binding site. 1-deoxy-D-xylulose 5-phosphate contacts are provided by serine 219, asparagine 224, lysine 225, and glutamate 228. Position 228 (glutamate 228) interacts with Mn(2+).

Belongs to the DXR family. Requires Mg(2+) as cofactor. Mn(2+) serves as cofactor.

The catalysed reaction is 2-C-methyl-D-erythritol 4-phosphate + NADP(+) = 1-deoxy-D-xylulose 5-phosphate + NADPH + H(+). It functions in the pathway isoprenoid biosynthesis; isopentenyl diphosphate biosynthesis via DXP pathway; isopentenyl diphosphate from 1-deoxy-D-xylulose 5-phosphate: step 1/6. Catalyzes the NADPH-dependent rearrangement and reduction of 1-deoxy-D-xylulose-5-phosphate (DXP) to 2-C-methyl-D-erythritol 4-phosphate (MEP). The sequence is that of 1-deoxy-D-xylulose 5-phosphate reductoisomerase from Nocardia farcinica (strain IFM 10152).